A 159-amino-acid polypeptide reads, in one-letter code: 2-C-methyl-D-erythritol 2,4-cyclodiphosphate synthase (159 aa).

The a divalent metal cation site is built by Asp10 and His12. 4-CDP-2-C-methyl-D-erythritol 2-phosphate contacts are provided by residues 10–12 (DVH) and 36–37 (HS). His44 lines the a divalent metal cation pocket. Residues 58–60 (DIG), 134–137 (TTSE), Phe141, and Arg144 each bind 4-CDP-2-C-methyl-D-erythritol 2-phosphate.

The protein belongs to the IspF family. As to quaternary structure, homotrimer. A divalent metal cation is required as a cofactor.

It carries out the reaction 4-CDP-2-C-methyl-D-erythritol 2-phosphate = 2-C-methyl-D-erythritol 2,4-cyclic diphosphate + CMP. The protein operates within isoprenoid biosynthesis; isopentenyl diphosphate biosynthesis via DXP pathway; isopentenyl diphosphate from 1-deoxy-D-xylulose 5-phosphate: step 4/6. Its function is as follows. Involved in the biosynthesis of isopentenyl diphosphate (IPP) and dimethylallyl diphosphate (DMAPP), two major building blocks of isoprenoid compounds. Catalyzes the conversion of 4-diphosphocytidyl-2-C-methyl-D-erythritol 2-phosphate (CDP-ME2P) to 2-C-methyl-D-erythritol 2,4-cyclodiphosphate (ME-CPP) with a corresponding release of cytidine 5-monophosphate (CMP). The sequence is that of 2-C-methyl-D-erythritol 2,4-cyclodiphosphate synthase from Cereibacter sphaeroides (strain ATCC 17025 / ATH 2.4.3) (Rhodobacter sphaeroides).